Here is a 435-residue protein sequence, read N- to C-terminus: Asparagine--tRNA ligase (435 aa).

This sequence belongs to the class-II aminoacyl-tRNA synthetase family. As to quaternary structure, homodimer.

The protein localises to the cytoplasm. The enzyme catalyses tRNA(Asn) + L-asparagine + ATP = L-asparaginyl-tRNA(Asn) + AMP + diphosphate + H(+). In Leptospira interrogans serogroup Icterohaemorrhagiae serovar copenhageni (strain Fiocruz L1-130), this protein is Asparagine--tRNA ligase.